A 708-amino-acid polypeptide reads, in one-letter code: Ribosomal RNA large subunit methyltransferase K/L (708 aa).

Residues 43 to 154 (QGYQITLWTR…RGKITIGINF (112 aa)) enclose the THUMP domain.

Belongs to the methyltransferase superfamily. RlmKL family.

Its subcellular location is the cytoplasm. It catalyses the reaction guanosine(2445) in 23S rRNA + S-adenosyl-L-methionine = N(2)-methylguanosine(2445) in 23S rRNA + S-adenosyl-L-homocysteine + H(+). The catalysed reaction is guanosine(2069) in 23S rRNA + S-adenosyl-L-methionine = N(2)-methylguanosine(2069) in 23S rRNA + S-adenosyl-L-homocysteine + H(+). Its function is as follows. Specifically methylates the guanine in position 2445 (m2G2445) and the guanine in position 2069 (m7G2069) of 23S rRNA. The protein is Ribosomal RNA large subunit methyltransferase K/L of Shewanella amazonensis (strain ATCC BAA-1098 / SB2B).